The chain runs to 1601 residues: Ras guanine nucleotide exchange factor glfB (1601 aa).

Disordered regions lie at residues 43 to 140 (PLLA…KEWD), 188 to 256 (DLLI…TTTT), 310 to 461 (SPQR…APDS), and 475 to 630 (LTTT…VKKG). The span at 45-55 (LAPPAPPPPPT) shows a compositional bias: pro residues. The segment covering 57–69 (QEINIGSGNSTFI) has biased composition (polar residues). Residues 70–126 (SSNNNNSNNNNNNNSNNNNNNNLNNSNNNNNNLNSNNNNNNNNNNNNNNGNNNNNSN) show a composition bias toward low complexity. Residue Ser-197 is modified to Phosphoserine. Thr-201 is modified (phosphothreonine). Low complexity-rich tracts occupy residues 211–256 (QQQQ…TTTT) and 310–330 (SPQR…GVVV). A compositionally biased stretch (acidic residues) spans 331–359 (ADEESDSSEEESDSSEEESDEYTDEESET). The span at 384 to 398 (PLTSVNSNDNTSSGT) shows a compositional bias: polar residues. Low complexity-rich tracts occupy residues 435 to 458 (TAVA…TTVA), 475 to 493 (LTTT…TQSI), and 500 to 520 (SQQR…AITK). Over residues 521–533 (PTKDAKDKKDPAK) the composition is skewed to basic and acidic residues. A compositionally biased stretch (low complexity) spans 558–577 (VPTGTSPPVSSSTSISSSTG). Residues 578-596 (IKKDKVKLSKEEKDRIKKE) are compositionally biased toward basic and acidic residues. The region spanning 649–836 (VRLTQLVLSN…LIIDNYVFLF (188 aa)) is the Rho-GAP domain. The 133-residue stretch at 851–983 (GKMIISEGSI…TINDFLKLPK (133 aa)) folds into the N-terminal Ras-GEF domain. The Ras-GEF domain maps to 1021-1255 (SAMEIAEQCT…ADLSLKCEPP (235 aa)). The interval 1262–1601 (YNAPADIVDE…QESVPSTNAE (340 aa)) is N-terminal F-actin-binding domain. The disordered stretch occupies residues 1443–1474 (SNVEKEKLSSSQEQQEQQEQKQQEQQQQQQEP). Positions 1465 to 1474 (QEQQQQQQEP) are enriched in low complexity.

As to quaternary structure, interacts with gpaB and rapA. Interacts directly with F-actin. Simultaneously phosphorylated at Ser-197 and Thr-201 after cAMP stimulation.

Its subcellular location is the cytoplasm. It localises to the cell cortex. The protein localises to the cytoskeleton. The protein resides in the cell projection. It is found in the filopodium. Its subcellular location is the lamellipodium. In terms of biological role, gpaB-activated, rapA-specific guanine nucleotide exchange factor, involved in the regulation of the balance between Ras and Rap signaling at the leading edge of chemotaxing cells. Spatially localized activation of Rap and Ras induces F-actin polymerization at the leading edge of chemotaxing cells through the Rac, PI3K, and TORC2 pathways. Also acts as a key regulator of actin-driven membrane protrusions during processes such as phagocytosis and cytokinesis, possibly by modulating rapA signaling pathways. This chain is Ras guanine nucleotide exchange factor glfB, found in Dictyostelium discoideum (Social amoeba).